Reading from the N-terminus, the 230-residue chain is Large ribosomal subunit protein uL1 (230 aa).

It belongs to the universal ribosomal protein uL1 family. As to quaternary structure, part of the 50S ribosomal subunit.

Its function is as follows. Binds directly to 23S rRNA. The L1 stalk is quite mobile in the ribosome, and is involved in E site tRNA release. Functionally, protein L1 is also a translational repressor protein, it controls the translation of the L11 operon by binding to its mRNA. In Bradyrhizobium sp. (strain ORS 278), this protein is Large ribosomal subunit protein uL1.